The chain runs to 351 residues: Ceramide hydroxylase (351 aa).

Helical transmembrane passes span 26 to 46 (AAIY…GFLI), 47 to 67 (AATT…MLAL), 141 to 161 (GFLF…AILI), and 204 to 224 (VACW…VVPV).

It belongs to the fatty acid desaturase type 1 family.

It localises to the cell inner membrane. The protein operates within lipid metabolism; sphingolipid metabolism. In terms of biological role, involved in de novo bacterial ceramide synthesis. The polypeptide is Ceramide hydroxylase (Caulobacter vibrioides (strain NA1000 / CB15N) (Caulobacter crescentus)).